A 692-amino-acid polypeptide reads, in one-letter code: Elongation factor G (692 aa).

One can recognise a tr-type G domain in the interval 8–282 (ENTRNIGIMA…AVIDYLPSPV (275 aa)). Residues 17–24 (AHIDAGKT), 81–85 (DTPGH), and 135–138 (NKMD) contribute to the GTP site.

This sequence belongs to the TRAFAC class translation factor GTPase superfamily. Classic translation factor GTPase family. EF-G/EF-2 subfamily.

It localises to the cytoplasm. Functionally, catalyzes the GTP-dependent ribosomal translocation step during translation elongation. During this step, the ribosome changes from the pre-translocational (PRE) to the post-translocational (POST) state as the newly formed A-site-bound peptidyl-tRNA and P-site-bound deacylated tRNA move to the P and E sites, respectively. Catalyzes the coordinated movement of the two tRNA molecules, the mRNA and conformational changes in the ribosome. The protein is Elongation factor G of Lysinibacillus sphaericus (strain C3-41).